The sequence spans 1377 residues: Zinc finger MYM-type protein 2 (1377 aa).

Residues Lys48, Lys88, Lys98, and Lys104 each participate in a glycyl lysine isopeptide (Lys-Gly) (interchain with G-Cter in SUMO2) cross-link. 2 stretches are compositionally biased toward polar residues: residues 85–115 (TSSK…SVSE) and 127–138 (TNQGQEKNSSNF). A disordered region spans residues 85–177 (TSSKNEELQG…GMGNSGITTE (93 aa)). Over residues 139 to 152 (IERRPPETKNRTND) the composition is skewed to basic and acidic residues. A Glycyl lysine isopeptide (Lys-Gly) (interchain with G-Cter in SUMO2) cross-link involves residue Lys147. Over residues 153-164 (VDFSTSSFSRSK) the composition is skewed to polar residues. Position 159 is a phosphoserine (Ser159). Glycyl lysine isopeptide (Lys-Gly) (interchain with G-Cter in SUMO2) cross-links involve residues Lys253 and Lys297. Residues 273 to 305 (NGESATHHNPDSWISQSASFPRNQKQPGVDSLS) are disordered. Residues 284–298 (SWISQSASFPRNQKQ) are compositionally biased toward polar residues. Position 305 is a phosphoserine (Ser305). Glycyl lysine isopeptide (Lys-Gly) (interchain with G-Cter in SUMO2) cross-links involve residues Lys312, Lys325, Lys348, and Lys366. Residues 327-363 (VKVTCANCKKPLQKGQTAYQRKGSAHLFCSTTCLSSF) form an MYM-type 1 zinc finger. The segment at 369–409 (PKKLCVMCKKDITTMKGTIVAQVDSSESFQEFCSTSCLSLY) adopts an MYM-type 2 zinc-finger fold. Residues Lys417, Lys441, Lys491, Lys503, Lys513, Lys529, and Lys532 each participate in a glycyl lysine isopeptide (Lys-Gly) (interchain with G-Cter in SUMO2) cross-link. MYM-type zinc fingers lie at residues 421-456 (NKSR…FNRY) and 463-502 (IMNC…VSEY). The MYM-type 5 zinc finger occupies 533–570 (LTTCTGCRTQCRFFDMTQCIGPNGYMEPYCSTACMNSH). Glycyl lysine isopeptide (Lys-Gly) (interchain with G-Cter in SUMO2) cross-links involve residues Lys576, Lys603, Lys649, Lys658, Lys688, Lys700, and Lys709. The segment at 636–671 (QLKCNYCKNSFCSKPEILEWENKVHQFCSKTCSDDY) adopts an MYM-type 6 zinc-finger fold. 2 MYM-type zinc fingers span residues 723 to 758 (RCVT…CKKF) and 764 to 799 (KAAR…LLRF). Residues Lys764, Lys788, Lys812, and Lys829 each participate in a glycyl lysine isopeptide (Lys-Gly) (interchain with G-Cter in SUMO2) cross-link. Ser838 and Ser958 each carry phosphoserine. Disordered stretches follow at residues 983 to 1002 (LLKN…PYEP) and 1028 to 1064 (VFGE…SDNS). A compositionally biased stretch (basic residues) spans 1039 to 1050 (PRSKKKGAKRKA). Ser1064 carries the post-translational modification Phosphoserine. Thr1376 carries the phosphothreonine modification.

In terms of assembly, may be a component of a BHC histone deacetylase complex that contains HDAC1, HDAC2, HMG20B/BRAF35, KDM1A, RCOR1/CoREST, PHF21A/BHC80, ZNF198, ZNF217, ZMYM3, GSE1 and GTF2I.

The protein resides in the nucleus. In terms of biological role, may function as a transcription factor. The protein is Zinc finger MYM-type protein 2 (ZMYM2) of Pongo abelii (Sumatran orangutan).